The chain runs to 406 residues: Subtilisin-like protease CPC735_023170 (406 aa).

An N-terminal signal peptide occupies residues 1–20; it reads MRLFQSTCVLVGTVLPLFTA. Residues 21-118 constitute a propeptide that is removed on maturation; it reads FPISSPREIE…VEPDSMAYVT (98 aa). Residues 35-115 form the Inhibitor I9 domain; it reads KYIITFKKGI…VESVEPDSMA (81 aa). The N-linked (GlcNAc...) asparagine glycan is linked to N125. One can recognise a Peptidase S8 domain in the interval 127–406; that stretch reads TYGPRRISHR…NKLAYNGSGK (280 aa). Catalysis depends on charge relay system residues D161 and H192. An N-linked (GlcNAc...) asparagine glycan is attached at N239. The interval 283–309 is disordered; it reads NDGRDAGRNSPGSAPESITVGSINSRR. N-linked (GlcNAc...) asparagine glycosylation occurs at N346. Residue S351 is the Charge relay system of the active site. A glycan (N-linked (GlcNAc...) asparagine) is linked at N402.

This sequence belongs to the peptidase S8 family.

It is found in the secreted. Functionally, secreted subtilisin-like serine protease with keratinolytic activity that contributes to pathogenicity. The polypeptide is Subtilisin-like protease CPC735_023170 (Coccidioides posadasii (strain C735) (Valley fever fungus)).